We begin with the raw amino-acid sequence, 689 residues long: Glycine--tRNA ligase beta subunit (689 aa).

The protein belongs to the class-II aminoacyl-tRNA synthetase family. Tetramer of two alpha and two beta subunits.

The protein resides in the cytoplasm. It carries out the reaction tRNA(Gly) + glycine + ATP = glycyl-tRNA(Gly) + AMP + diphosphate. This is Glycine--tRNA ligase beta subunit from Escherichia coli O127:H6 (strain E2348/69 / EPEC).